The sequence spans 148 residues: UPF0260 protein Maqu_1608 (148 aa).

Belongs to the UPF0260 family.

This is UPF0260 protein Maqu_1608 from Marinobacter nauticus (strain ATCC 700491 / DSM 11845 / VT8) (Marinobacter aquaeolei).